The primary structure comprises 335 residues: COP9 signalosome complex subunit 5 (335 aa).

The region spanning Val51 to Asp187 is the MPN domain. Positions 134, 136, and 147 each coordinate Zn(2+). Residues His134 to Asp147 carry the JAMM motif motif.

It belongs to the peptidase M67A family. CSN5 subfamily. Component of the COP9 signalosome (CSN) complex.

The protein localises to the cytoplasm. It localises to the nucleus. Functionally, catalytic component of the COP9 signalosome (CSN) complex that acts as an regulator of the ubiquitin (Ubl) conjugation pathway by mediating the deneddylation of the cullin subunit of SCF-type E3 ubiquitin-protein ligase complexes. The CSN complex seems to link protein degradation to sexual development. Required for fruit body formation. The polypeptide is COP9 signalosome complex subunit 5 (rri1) (Emericella nidulans (strain FGSC A4 / ATCC 38163 / CBS 112.46 / NRRL 194 / M139) (Aspergillus nidulans)).